The sequence spans 491 residues: Probable V-type proton ATPase subunit B 1 (491 aa).

Arg380 lines the ATP pocket.

It belongs to the ATPase alpha/beta chains family. As to quaternary structure, V-ATPase is a heteromultimeric enzyme made up of two complexes: the ATP-hydrolytic V1 complex and the proton translocation V0 complex. The V1 complex consists of three catalytic AB heterodimers that form a heterohexamer, three peripheral stalks each consisting of EG heterodimers, one central rotor including subunits D and F, and the regulatory subunits C and H. The proton translocation complex V0 consists of the proton transport subunit a, a ring of proteolipid subunits c9c'', rotary subunit d, subunits e and f, and the accessory subunits vah-19/Ac45 and vah-20/PRR.

Non-catalytic subunit of the V1 complex of vacuolar(H+)-ATPase (V-ATPase), a multisubunit enzyme composed of a peripheral complex (V1) that hydrolyzes ATP and a membrane integral complex (V0) that translocates protons. V-ATPase is responsible for acidifying and maintaining the pH of intracellular compartments and in some cell types, is targeted to the plasma membrane, where it is responsible for acidifying the extracellular environment. Essential for the proper assembly and activity of V-ATPase. Required maternally for early embryogenesis and zygotically during morphogenesis. Specifically, involved in the clearance of apoptotic cell corpses in embryos. Also, during embryonic development, the V-ATPase is required to repress fusion of epidermal cells probably by negatively regulating eff-1-mediated cell fusion. In neurons, required for necrotic cell death by promoting intracellular acidification. Required for cell death induced by hypoxia. Required for acidification of synaptic vesicles and the release of neurotransmitters from adult neurons. This Caenorhabditis briggsae protein is Probable V-type proton ATPase subunit B 1.